Consider the following 349-residue polypeptide: Probable ethanolamine kinase A (349 aa).

The protein belongs to the choline/ethanolamine kinase family.

Its subcellular location is the cytoplasm. It carries out the reaction ethanolamine + ATP = phosphoethanolamine + ADP + H(+). It functions in the pathway phospholipid metabolism; phosphatidylethanolamine biosynthesis; phosphatidylethanolamine from ethanolamine: step 1/3. Functionally, highly specific for ethanolamine phosphorylation. May be a rate-controlling step in phosphatidylethanolamine biosynthesis. In Dictyostelium discoideum (Social amoeba), this protein is Probable ethanolamine kinase A (etnkA).